The following is a 314-amino-acid chain: Thymidylate synthase (314 aa).

DUMP-binding positions include R32 and 176–177; that span reads RR. The active-site Nucleophile is the C196. Residues 216-219, N227, and 257-259 each bind dUMP; these read RSCD and HLY. D219 contacts (6R)-5,10-methylene-5,6,7,8-tetrahydrofolate. A313 lines the (6R)-5,10-methylene-5,6,7,8-tetrahydrofolate pocket.

The protein belongs to the thymidylate synthase family. Bacterial-type ThyA subfamily. As to quaternary structure, homodimer.

It is found in the cytoplasm. The enzyme catalyses dUMP + (6R)-5,10-methylene-5,6,7,8-tetrahydrofolate = 7,8-dihydrofolate + dTMP. It participates in pyrimidine metabolism; dTTP biosynthesis. Functionally, catalyzes the reductive methylation of 2'-deoxyuridine-5'-monophosphate (dUMP) to 2'-deoxythymidine-5'-monophosphate (dTMP) while utilizing 5,10-methylenetetrahydrofolate (mTHF) as the methyl donor and reductant in the reaction, yielding dihydrofolate (DHF) as a by-product. This enzymatic reaction provides an intracellular de novo source of dTMP, an essential precursor for DNA biosynthesis. In Novosphingobium aromaticivorans (strain ATCC 700278 / DSM 12444 / CCUG 56034 / CIP 105152 / NBRC 16084 / F199), this protein is Thymidylate synthase.